The primary structure comprises 670 residues: Zinc finger and BTB domain-containing protein 5 (670 aa).

Positions 24 to 93 (CDCVIVVGNR…MYTSTLMLGE (70 aa)) constitute a BTB domain. Disordered regions lie at residues 158-256 (LSSS…QEDG) and 268-382 (EDAQ…SSTD). The span at 170 to 181 (PMSSSMRSSLDQ) shows a compositional bias: polar residues. A Phosphoserine modification is found at S234. A Glycyl lysine isopeptide (Lys-Gly) (interchain with G-Cter in SUMO2) cross-link involves residue K239. A compositionally biased stretch (polar residues) spans 285–295 (SRATQVETSFE). Residues K317 and K325 each participate in a glycyl lysine isopeptide (Lys-Gly) (interchain with G-Cter in SUMO2) cross-link. The span at 345 to 360 (AEGSESVEVEGVVVSA) shows a compositional bias: low complexity. A compositionally biased stretch (basic and acidic residues) spans 361–374 (EKIDLSPESSDRSF). S366 bears the Phosphoserine mark. Residues K399 and K410 each participate in a glycyl lysine isopeptide (Lys-Gly) (interchain with G-Cter in SUMO2) cross-link. Polar residues predominate over residues 414 to 432 (SNFSASQSTDDNLPNTTSD). 2 disordered regions span residues 414-433 (SNFSASQSTDDNLPNTTSDC) and 442-470 (LLSPEAGPAGGPSSAPGSHVENPFSEPAD). A compositionally biased stretch (low complexity) spans 444 to 459 (SPEAGPAGGPSSAPGS). Glycyl lysine isopeptide (Lys-Gly) (interchain with G-Cter in SUMO2) cross-links involve residues K535, K587, and K590. Residues 606–628 (YACKICCKTFLTLTDCKKHIRVH) form a C2H2-type 1 zinc finger. A C2H2-type 2; atypical zinc finger spans residues 634-657 (YACLKCGKRFSQSSHLYKHSKTTC). Residues K638 and K651 each participate in a glycyl lysine isopeptide (Lys-Gly) (interchain with G-Cter in SUMO2) cross-link.

It localises to the nucleus. In terms of biological role, may be involved in transcriptional regulation. In Mus musculus (Mouse), this protein is Zinc finger and BTB domain-containing protein 5 (Zbtb5).